An 809-amino-acid chain; its full sequence is Carbon monoxide dehydrogenase large chain (809 aa).

Cysteine 388 is a binding site for Cu(+). Glutamate 763 contributes to the Mo-molybdopterin cytosine dinucleotide binding site.

In terms of assembly, dimer of heterotrimers. Each heterotrimer consists of a large, a medium and a small subunit. It depends on Cu(+) as a cofactor. Mo-molybdopterin cytosine dinucleotide is required as a cofactor.

The catalysed reaction is CO + a quinone + H2O = a quinol + CO2. Its function is as follows. Catalyzes the oxidation of carbon monoxide to carbon dioxide. The protein is Carbon monoxide dehydrogenase large chain (coxL) of Afipia carboxidovorans (strain ATCC 49405 / DSM 1227 / KCTC 32145 / OM5) (Oligotropha carboxidovorans).